A 481-amino-acid chain; its full sequence is Xylulose kinase (481 aa).

Position 81 to 82 (81 to 82) interacts with substrate; it reads QH. The Proton acceptor role is filled by Asp-239.

Belongs to the FGGY kinase family.

The catalysed reaction is D-xylulose + ATP = D-xylulose 5-phosphate + ADP + H(+). Its function is as follows. Catalyzes the phosphorylation of D-xylulose to D-xylulose 5-phosphate. This is Xylulose kinase from Streptomyces coelicolor (strain ATCC BAA-471 / A3(2) / M145).